The chain runs to 616 residues: Dihydroxy-acid dehydratase (616 aa).

Position 81 (D81) interacts with Mg(2+). C122 contributes to the [2Fe-2S] cluster binding site. D123 and K124 together coordinate Mg(2+). K124 carries the post-translational modification N6-carboxylysine. Residue C195 participates in [2Fe-2S] cluster binding. E491 is a Mg(2+) binding site. S517 (proton acceptor) is an active-site residue.

It belongs to the IlvD/Edd family. As to quaternary structure, homodimer. [2Fe-2S] cluster serves as cofactor. Requires Mg(2+) as cofactor.

The enzyme catalyses (2R)-2,3-dihydroxy-3-methylbutanoate = 3-methyl-2-oxobutanoate + H2O. It catalyses the reaction (2R,3R)-2,3-dihydroxy-3-methylpentanoate = (S)-3-methyl-2-oxopentanoate + H2O. Its pathway is amino-acid biosynthesis; L-isoleucine biosynthesis; L-isoleucine from 2-oxobutanoate: step 3/4. The protein operates within amino-acid biosynthesis; L-valine biosynthesis; L-valine from pyruvate: step 3/4. In terms of biological role, functions in the biosynthesis of branched-chain amino acids. Catalyzes the dehydration of (2R,3R)-2,3-dihydroxy-3-methylpentanoate (2,3-dihydroxy-3-methylvalerate) into 2-oxo-3-methylpentanoate (2-oxo-3-methylvalerate) and of (2R)-2,3-dihydroxy-3-methylbutanoate (2,3-dihydroxyisovalerate) into 2-oxo-3-methylbutanoate (2-oxoisovalerate), the penultimate precursor to L-isoleucine and L-valine, respectively. This Shewanella sediminis (strain HAW-EB3) protein is Dihydroxy-acid dehydratase.